Here is a 345-residue protein sequence, read N- to C-terminus: Protein RecA (345 aa).

An ATP-binding site is contributed by 65–72; the sequence is GPESSGKT.

Belongs to the RecA family.

The protein resides in the cytoplasm. Functionally, can catalyze the hydrolysis of ATP in the presence of single-stranded DNA, the ATP-dependent uptake of single-stranded DNA by duplex DNA, and the ATP-dependent hybridization of homologous single-stranded DNAs. It interacts with LexA causing its activation and leading to its autocatalytic cleavage. The sequence is that of Protein RecA from Colwellia psychrerythraea (strain 34H / ATCC BAA-681) (Vibrio psychroerythus).